Reading from the N-terminus, the 749-residue chain is Poly(U)-binding-splicing factor rnp-6 (749 aa).

RRM domains follow at residues 102–176 and 207–285; these read SRIY…LKVN and FRVY…KCVT. Disordered stretches follow at residues 323 to 388 and 457 to 480; these read AGSS…PDVV and IEEEEEARTERVKLSTSQRKKMKR. Over residues 330–354 the composition is skewed to low complexity; sequence PSESGGSRAASPAPRAQSPATPSSS. The 82-residue stretch at 658 to 739 folds into the RRM 3; atypical domain; the sequence is NVIVLRNMVT…NTVKAEAYDQ (82 aa).

Belongs to the RRM half pint family.

It is found in the nucleus. Functionally, DNA- and RNA-binding protein, involved in several nuclear processes such as pre-mRNA splicing, apoptosis and transcription regulation. Ensures the correct splicing of genes involved in immunity to promote longevity in response to infection by pathogenic bacteria such as S.aureus. In Caenorhabditis elegans, this protein is Poly(U)-binding-splicing factor rnp-6.